The primary structure comprises 328 residues: MVREKVKVSTRTLQWKCVESRADSKRLYYGRFILSPLMKGQADTIGIAMRRVLLGEIEGTCITRAKSEKIPHEYSTIVGIQESVHEILMNLKDIVLRSNLYGTCDALICVKGPGYVTAQDILLPPSVEIVDNTQHIASLTEPIDLSIGLQIERSRGYNIKTPNTFQDGNCYPIDAVFMPVRNANHSIQSYGNGNEKQEILFLEIWTNGSLTPKEALHEASRSLIDLFIPFLQAEDENLPLENNQYKVTLPFFTFHDRLAKLTKKKKEIALKSIFIDQSEMSPRIYNCLKKSNIHTLFDLLNTRQEDLMKIEHFRIEDVKQIMSILEKK.

Residues 1 to 234 (MVREKVKVST…DLFIPFLQAE (234 aa)) are alpha N-terminal domain (alpha-NTD). The tract at residues 268–328 (IALKSIFIDQ…KQIMSILEKK (61 aa)) is alpha C-terminal domain (alpha-CTD).

Belongs to the RNA polymerase alpha chain family. As to quaternary structure, in plastids the minimal PEP RNA polymerase catalytic core is composed of four subunits: alpha, beta, beta', and beta''. When a (nuclear-encoded) sigma factor is associated with the core the holoenzyme is formed, which can initiate transcription.

Its subcellular location is the plastid. It localises to the chloroplast. The enzyme catalyses RNA(n) + a ribonucleoside 5'-triphosphate = RNA(n+1) + diphosphate. DNA-dependent RNA polymerase catalyzes the transcription of DNA into RNA using the four ribonucleoside triphosphates as substrates. In Citrus sinensis (Sweet orange), this protein is DNA-directed RNA polymerase subunit alpha.